Consider the following 916-residue polypeptide: Bifunctional aspartokinase/homoserine dehydrogenase 2, chloroplastic (916 aa).

A chloroplast-targeting transit peptide spans 1–87 (MATLKPSFTV…VDQVQIPKGE (87 aa)). The segment at 88–336 (MWSVHKFGGT…VNEAVILQTL (249 aa)) is aspartokinase. The tract at residues 337–562 (SYQEAWEMSY…LSRTTLAMGI (226 aa)) is interface. 2 consecutive ACT domains span residues 412 to 487 (VEGT…VIPN) and 493 to 570 (AVGQ…LIGA). The tract at residues 563 to 916 (VGPGLIGATL…RLASYLGAPS (354 aa)) is homoserine dehydrogenase. Residue Ile568 participates in NAD(+) binding. NADP(+) is bound by residues Ile568, Lys600, Thr649, and Lys673. Residue Ile568 participates in NADPH binding. Thr649 is a binding site for NAD(+). NADPH contacts are provided by Thr649 and Lys673. Na(+) contacts are provided by Glu700, Val703, Ala705, and Leu707. Residues Gly758 and Glu761 each coordinate NADP(+). Glu761 and Asp772 together coordinate L-homoserine. Lys776 serves as the catalytic Proton donor. Gly893 lines the NAD(+) pocket. An NADP(+)-binding site is contributed by Gly893. Gly893 is an NADPH binding site.

In the N-terminal section; belongs to the aspartokinase family. This sequence in the C-terminal section; belongs to the homoserine dehydrogenase family. As to quaternary structure, homo- or heterodimer. It depends on a metal cation as a cofactor.

The protein localises to the plastid. It localises to the chloroplast. It carries out the reaction L-homoserine + NADP(+) = L-aspartate 4-semialdehyde + NADPH + H(+). The enzyme catalyses L-homoserine + NAD(+) = L-aspartate 4-semialdehyde + NADH + H(+). It catalyses the reaction L-aspartate + ATP = 4-phospho-L-aspartate + ADP. Its pathway is amino-acid biosynthesis; L-lysine biosynthesis via DAP pathway; (S)-tetrahydrodipicolinate from L-aspartate: step 1/4. It participates in amino-acid biosynthesis; L-methionine biosynthesis via de novo pathway; L-homoserine from L-aspartate: step 1/3. The protein operates within amino-acid biosynthesis; L-methionine biosynthesis via de novo pathway; L-homoserine from L-aspartate: step 3/3. It functions in the pathway amino-acid biosynthesis; L-threonine biosynthesis; L-threonine from L-aspartate: step 1/5. Its pathway is amino-acid biosynthesis; L-threonine biosynthesis; L-threonine from L-aspartate: step 3/5. Its activity is regulated as follows. Threonine interaction with Gln-443 leads to inhibition of aspartate kinase activity and facilitates the binding of a second threonine on Gln-524, leading to a partial inhibition of homoserine dehydrogenase activity (25% of activity remaining at saturation with threonine). Homoserine dehydrogenase activity is also partially inhibited by cysteine (15% of activity remaining at saturation with cysteine). No synergy between threonine and cysteine for the inhibition. 13-fold activation of aspartate kinase activity by cysteine, isoleucine, valine, serine and alanine at 2.5 mM and 4-fold activation by leucine at 2.5 mM, but no activation of homoserine dehydrogenase activity. Bifunctional aspartate kinase and homoserine dehydrogenase that catalyzes the first and the third steps toward the synthesis of lysine, methionine and threonine from aspartate. The polypeptide is Bifunctional aspartokinase/homoserine dehydrogenase 2, chloroplastic (AKHSDH2) (Arabidopsis thaliana (Mouse-ear cress)).